A 417-amino-acid chain; its full sequence is Probable serpin E3 (417 aa).

A signal peptide spans 1-24 (MPQLSASSLFICLWLVDLCHVANS). N-linked (GlcNAc...) asparagine glycosylation is found at Asn50, Asn106, Asn140, Asn147, and Asn152.

This sequence belongs to the serpin family.

The protein resides in the secreted. Probable serine protease inhibitor. This Danio rerio (Zebrafish) protein is Probable serpin E3 (serpine3).